Here is a 97-residue protein sequence, read N- to C-terminus: Co-chaperonin GroES (97 aa).

The protein belongs to the GroES chaperonin family. As to quaternary structure, heptamer of 7 subunits arranged in a ring. Interacts with the chaperonin GroEL.

It is found in the cytoplasm. Together with the chaperonin GroEL, plays an essential role in assisting protein folding. The GroEL-GroES system forms a nano-cage that allows encapsulation of the non-native substrate proteins and provides a physical environment optimized to promote and accelerate protein folding. GroES binds to the apical surface of the GroEL ring, thereby capping the opening of the GroEL channel. This Pseudomonas fluorescens (strain ATCC BAA-477 / NRRL B-23932 / Pf-5) protein is Co-chaperonin GroES.